Reading from the N-terminus, the 375-residue chain is Putative F-box protein At1g12190 (375 aa).

Residues 1–46 enclose the F-box domain; the sequence is MACVKFPWELMEEILYRVPSLSLSRFKTVSKEWNTLLNDKTFIKKH.

This chain is Putative F-box protein At1g12190, found in Arabidopsis thaliana (Mouse-ear cress).